The sequence spans 306 residues: D-glucosamine-6-phosphate 4-epimerase (306 aa).

The 135-residue stretch at 19–153 folds into the SIS domain; the sequence is DIPGVKTAEK…TGSNYRVQDL (135 aa). The Proton acceptor role is filled by Glu200. The active-site Proton donor is His216. Arg296 acts as the Proton acceptor in catalysis.

It belongs to the PGI/PMI family.

It catalyses the reaction D-glucosamine 6-phosphate = D-galactosamine 6-phosphate. Functionally, involved in the synthesis of UDP-N-acetylgalactosamine (UDP-GalNAc). Catalyzes the conversion of glucosamine-6-phosphate (GlcN-6-P) to galactosamine-6-phosphate (GalN-6-P). This is D-glucosamine-6-phosphate 4-epimerase from Sulfolobus acidocaldarius (strain ATCC 33909 / DSM 639 / JCM 8929 / NBRC 15157 / NCIMB 11770).